Here is a 184-residue protein sequence, read N- to C-terminus: UPF0301 protein RSKD131_2391 (184 aa).

It belongs to the UPF0301 (AlgH) family.

This Cereibacter sphaeroides (strain KD131 / KCTC 12085) (Rhodobacter sphaeroides) protein is UPF0301 protein RSKD131_2391.